Here is a 288-residue protein sequence, read N- to C-terminus: Hyaluronidase (288 aa).

Asn-36 is a glycosylation site (N-linked (GlcNAc...) asparagine). The active-site Proton donor is the Glu-66. Cysteines 142 and 154 form a disulfide. N-linked (GlcNAc...) asparagine glycosylation is present at Asn-282.

The protein belongs to the glycosyl hydrolase 56 family. As to expression, expressed by the venom gland.

The protein localises to the secreted. The enzyme catalyses Random hydrolysis of (1-&gt;4)-linkages between N-acetyl-beta-D-glucosamine and D-glucuronate residues in hyaluronate.. Its function is as follows. Hydrolyzes high molecular weight hyaluronic acid to produce small oligosaccharides. The polypeptide is Hyaluronidase (Polybia paulista (Neotropical social wasp)).